The chain runs to 306 residues: Pantothenate kinase (306 aa).

91–98 (GSVAVGKS) provides a ligand contact to ATP.

Belongs to the prokaryotic pantothenate kinase family.

It is found in the cytoplasm. The enzyme catalyses (R)-pantothenate + ATP = (R)-4'-phosphopantothenate + ADP + H(+). The protein operates within cofactor biosynthesis; coenzyme A biosynthesis; CoA from (R)-pantothenate: step 1/5. The protein is Pantothenate kinase of Streptococcus pneumoniae serotype 19F (strain G54).